The sequence spans 376 residues: uncharacterized protein (376 aa).

This sequence belongs to the choline/ethanolamine kinase family.

This is an uncharacterized protein from Caenorhabditis elegans.